The sequence spans 313 residues: Porphobilinogen deaminase (313 aa).

Cys-242 carries the S-(dipyrrolylmethanemethyl)cysteine modification.

This sequence belongs to the HMBS family. As to quaternary structure, monomer. Dipyrromethane serves as cofactor.

It carries out the reaction 4 porphobilinogen + H2O = hydroxymethylbilane + 4 NH4(+). It participates in porphyrin-containing compound metabolism; protoporphyrin-IX biosynthesis; coproporphyrinogen-III from 5-aminolevulinate: step 2/4. Functionally, tetrapolymerization of the monopyrrole PBG into the hydroxymethylbilane pre-uroporphyrinogen in several discrete steps. This chain is Porphobilinogen deaminase, found in Pseudomonas fluorescens (strain SBW25).